Consider the following 480-residue polypeptide: MNFETVIGLEVHVELNTNSKIFSPTSAHFGNDQNANTNVIDWSFPGVLPVLNKGVVDAGIKAALALNMDIHKKMHFDRKNYFYPDNPKAYQISQFDEPIGYNGWIEVELEDGTTKKIGIERAHLEEDAGKNTHGTDGYSYVDLNRQGVPLIEIVSEADMRSPEEAYAYLTALKEVIQYAGISDVKMEEGSMRVDANISLRPYGQEKFGTKTELKNLNSFSNVRKGLEYEVQRQAEILRSGGQIRQETRRYDEANKATILMRVKEGAADYRYFPEPDLPLFEISDEWIEEMRTELPEFPKERRARYVSDLGLSDYDASQLTANKVTSDFFEKAVALGGDAKQVSNWLQGEVAQFLNAEGKTLEQIELTPENLVEMIAIIEDGTISSKIAKKVFVHLAKNGGGAREYVEKAGMVQISDPAILIPIIHQVFADNEAAVADFKSGKRNADKAFTGFLMKATKGQANPQVALKLLAQELAKLKEN.

This sequence belongs to the GatB/GatE family. GatB subfamily. In terms of assembly, heterotrimer of A, B and C subunits.

The catalysed reaction is L-glutamyl-tRNA(Gln) + L-glutamine + ATP + H2O = L-glutaminyl-tRNA(Gln) + L-glutamate + ADP + phosphate + H(+). It carries out the reaction L-aspartyl-tRNA(Asn) + L-glutamine + ATP + H2O = L-asparaginyl-tRNA(Asn) + L-glutamate + ADP + phosphate + 2 H(+). Functionally, allows the formation of correctly charged Asn-tRNA(Asn) or Gln-tRNA(Gln) through the transamidation of misacylated Asp-tRNA(Asn) or Glu-tRNA(Gln) in organisms which lack either or both of asparaginyl-tRNA or glutaminyl-tRNA synthetases. The reaction takes place in the presence of glutamine and ATP through an activated phospho-Asp-tRNA(Asn) or phospho-Glu-tRNA(Gln). This chain is Aspartyl/glutamyl-tRNA(Asn/Gln) amidotransferase subunit B, found in Streptococcus pneumoniae serotype 2 (strain D39 / NCTC 7466).